A 313-amino-acid chain; its full sequence is MNRLAVELPGLSLKNPIMPASGCFGFGREYARFYDLSVLGAIMIKATTKEPRFGNPTPRVAETPGGMLNAIGLQNPGLDKVLEEELPWLEQFDVPIIANIAGSTVEEYVEVAEAISKAPNVHALELNISCPNVKKGGIAFGTVPDVAAELTRLVKEVAAVPVYVNVSPNVTDIVAMAKAIEQAGADGLTMINTLVGMRIDVKTGRPILANGTGGLSGPAVKPIAIRMIYEVSQAVSIPIIGMGGIQTAEDVLEFFYAGASAVAVGTANFVDPFVCPTIIADLPALLDDLGIGHISECIGRSWKTGAHAVHCRA.

Residues Ser21 and 45 to 46 each bind FMN; that span reads KA. Substrate is bound by residues Lys45 and 69–73; that span reads NAIGL. The FMN site is built by Asn99 and Asn127. Asn127 is a substrate binding site. Cys130 (nucleophile) is an active-site residue. Ile191 is a binding site for FMN. Position 192–193 (192–193) interacts with substrate; that stretch reads NT. FMN is bound by residues Gly217, 243-244, and 265-266; these read GG and GT.

Belongs to the dihydroorotate dehydrogenase family. Type 1 subfamily. Heterotetramer of 2 PyrK and 2 PyrD type B subunits. FMN is required as a cofactor.

The protein resides in the cytoplasm. The catalysed reaction is (S)-dihydroorotate + NAD(+) = orotate + NADH + H(+). The protein operates within pyrimidine metabolism; UMP biosynthesis via de novo pathway; orotate from (S)-dihydroorotate (NAD(+) route): step 1/1. Functionally, catalyzes the conversion of dihydroorotate to orotate with NAD(+) as electron acceptor. The polypeptide is Dihydroorotate dehydrogenase B (NAD(+)), catalytic subunit (pyrD) (Bacillus caldolyticus).